The sequence spans 218 residues: Ras-related protein Rab11D (218 aa).

A GTP-binding site is contributed by 20–27 (GDSGVGKS). Residues 42–50 (SKSTIGVEF) carry the Effector region motif. GTP is bound by residues 68 to 72 (DTAGQ) and 126 to 129 (NKSD). 2 S-geranylgeranyl cysteine lipidation sites follow: cysteine 215 and cysteine 216.

It belongs to the small GTPase superfamily. Rab family.

It is found in the cell membrane. The sequence is that of Ras-related protein Rab11D (RAB11D) from Lotus japonicus (Lotus corniculatus var. japonicus).